A 65-amino-acid polypeptide reads, in one-letter code: Hainantoxin-X (65 aa).

The N-terminal stretch at 1 to 20 is a signal peptide; sequence MNMKILVLVAVLCLVVSTHA. The propeptide occupies 21–37; it reads ERHSKTDMEDSPMIQER. Disulfide bonds link Cys39-Cys56, Cys46-Cys59, and Cys55-Cys64.

Belongs to the neurotoxin 36 family. 02 subfamily. In terms of tissue distribution, expressed by the venom gland.

Its subcellular location is the secreted. Functionally, reversibly blocks N-type calcium channels (Cav2.2/CACNA1B) in rat dorsal root ganglion cells. Elicits no toxic symptoms in either vertebrates or invertebrates during a period of 48 hours post-injection, when it was assayed in vivo by direct injection into mice and cockroaches. The polypeptide is Hainantoxin-X (Cyriopagopus hainanus (Chinese bird spider)).